A 624-amino-acid chain; its full sequence is Probable potassium transport system protein Kup 1 (624 aa).

Helical transmembrane passes span 10–30 (LALG…LYAL), 48–68 (LSLI…MIIF), 94–114 (PLFY…GMLT), 133–153 (LYPY…SLQA), 159–179 (IGYL…ILGI), 210–230 (LLLG…ADIG), 242–262 (FFAA…NLIV), 270–290 (PFFM…ATVA), 331–351 (IYVP…CLAF), 363–383 (IAVN…AISI), 388–408 (IFNV…FLGA), and 413–433 (FITG…IMYS).

It belongs to the HAK/KUP transporter (TC 2.A.72) family.

Its subcellular location is the cell inner membrane. It carries out the reaction K(+)(in) + H(+)(in) = K(+)(out) + H(+)(out). Functionally, transport of potassium into the cell. Likely operates as a K(+):H(+) symporter. The polypeptide is Probable potassium transport system protein Kup 1 (Legionella pneumophila (strain Lens)).